Reading from the N-terminus, the 247-residue chain is MSRFKLTLEYDGSNYAGWQRQAKLHTIQGALEQAIFRFSGQQLTITTAGRTDAGVHATGQVAHVDFIKNWPPHTVRDALNALLRQQSEAISILNVENVPDDFDARFSAIKRHYLFKILNRRSPPALNAKRVWWIPKPLNAQAMHEAAQKLVGQHDFTTFRSAHCQAKSPIRTLERLDIQKEGEEIFIYAKARSFLHHQIRSFAGSLMEVGIGRWTAQDLEAALHAKDRKRCGVVAPPSGLYLTKVEY.

Asp-52 (nucleophile) is an active-site residue. Position 113 (Tyr-113) interacts with substrate.

Belongs to the tRNA pseudouridine synthase TruA family. As to quaternary structure, homodimer.

It carries out the reaction uridine(38/39/40) in tRNA = pseudouridine(38/39/40) in tRNA. Functionally, formation of pseudouridine at positions 38, 39 and 40 in the anticodon stem and loop of transfer RNAs. In Bartonella tribocorum (strain CIP 105476 / IBS 506), this protein is tRNA pseudouridine synthase A.